The primary structure comprises 64 residues: Lantibiotic actagardine (64 aa).

The propeptide occupies 1–45 (MSALAIEKSWKDVDLRDGATSHPAGLGFGELTFEDLREDRTIYAA). Positions 46–51 (SSGWVC) form a cross-link, lanthionine (Ser-Cys). 2 consecutive cross-links (beta-methyllanthionine (Thr-Cys)) follow at residues 52-57 (TLTIEC) and 54-62 (TIECGTVIC). Residues 59–64 (TVICAC) constitute a cross-link (beta-methyllanthionine sulfoxide (Thr-Cys)).

Belongs to the type B lantibiotic family. Maturation of lantibiotics involves the enzymatic conversion of Thr, and Ser into dehydrated AA by the enzyme garM and the formation of thioether bonds with cysteine. The 59-64 beta-methyllanthionine thioether bond is oxidized to a sulfoxide by the monooxygenase GarO. This is followed by membrane translocation and cleavage of the modified precursor. Post-translationally, the sulfoxide group of the 59-64 beta-methyllanthionine thioether bond is mildly important for activity, since the antibacterial activity of deoxyactagardine is marginally lower compared with oxidized actagardine.

In terms of biological role, has potent antibacterial activity against some Gram-positive bacteria. Has good antistreptococcal activity. Inhibits cell wall biosynthesis by binding to lipid II and blocking transglycosylation. The polypeptide is Lantibiotic actagardine (Actinoplanes garbadinensis).